The primary structure comprises 381 residues: Lipid-A-disaccharide synthase (381 aa).

It belongs to the LpxB family.

The catalysed reaction is a lipid X + a UDP-2-N,3-O-bis[(3R)-3-hydroxyacyl]-alpha-D-glucosamine = a lipid A disaccharide + UDP + H(+). It functions in the pathway bacterial outer membrane biogenesis; LPS lipid A biosynthesis. Its function is as follows. Condensation of UDP-2,3-diacylglucosamine and 2,3-diacylglucosamine-1-phosphate to form lipid A disaccharide, a precursor of lipid A, a phosphorylated glycolipid that anchors the lipopolysaccharide to the outer membrane of the cell. This Psychromonas ingrahamii (strain DSM 17664 / CCUG 51855 / 37) protein is Lipid-A-disaccharide synthase.